Consider the following 359-residue polypeptide: Mannose-1-phosphate guanylyltransferase (359 aa).

It belongs to the transferase hexapeptide repeat family.

It carries out the reaction alpha-D-mannose 1-phosphate + GTP + H(+) = GDP-alpha-D-mannose + diphosphate. The protein operates within cell wall biogenesis. It functions in the pathway nucleotide-sugar biosynthesis; GDP-alpha-D-mannose biosynthesis; GDP-alpha-D-mannose from alpha-D-mannose 1-phosphate (GTP route): step 1/1. Functionally, catalyzes the formation of GDP-mannose from D-mannose-1-phosphate and GTP. Plays an important role in the synthesis of different glycoconjugates which are responsible for cell wall structure, virulence and immunomodulatory activity of M.tuberculosis. The polypeptide is Mannose-1-phosphate guanylyltransferase (Mycobacterium tuberculosis (strain ATCC 25618 / H37Rv)).